A 111-amino-acid polypeptide reads, in one-letter code: 4'-hydroxy-3'-methoxypropiophenone carrier protein ppsC (111 aa).

The interval 1 to 21 (MSAQVMRPGTPQHEGQEFLSG) is disordered.

It participates in secondary metabolite biosynthesis. Its function is as follows. 4'-hydroxy-3'-methoxypropiophenone carrier protein; part of the gene cluster that mediates the biosynthesis of 2,4'-dihydroxy-3'-methoxypropiophenone. The first step of the pathway is the conversion of acetate into acetyl-CoA by the acyl-CoA ligase ppsA. Acetyl-CoA is then used as a starter unit by the polyketide synthase ppsB and condensed with 4 malonyl-CoA unit to produce the pentaketide backbone. During polyketide extension, the polykedite chain is probably reduced and dehydrated by the KR and PT domains, respectively. O-methylation seems to be catalyzed by an unknown methyltransferase rather than by the CMeT domain of ppsB. Two hydroxylations and one further decarboxylation step catalyzed by yet unknown enzymes are then required to yield 4'-hydroxy-3'-methoxypropiophenone. PpsC functions as a carrier protein to transport 4'-hydroxy-3'-methoxypropiophenone to a specific cell compartment in which 4'-hydroxy-3'-methoxypropiophenone is hydroxylated to 2,4'-dihydroxy-3'-methoxypropiophenone by a still to be identified enzyme. The sequence is that of 4'-hydroxy-3'-methoxypropiophenone carrier protein ppsC from Aspergillus oryzae (strain ATCC 42149 / RIB 40) (Yellow koji mold).